A 357-amino-acid chain; its full sequence is 4-hydroxy-2-oxovalerate aldolase (357 aa).

The interval 1-21 (MSQEAARDAAAGRPVQIHDPT) is disordered. In terms of domain architecture, Pyruvate carboxyltransferase spans 15-265 (VQIHDPTLRD…RTGIDLYRLL (251 aa)). 23–24 (RD) serves as a coordination point for substrate. Position 24 (Asp-24) interacts with Mn(2+). Catalysis depends on His-27, which acts as the Proton acceptor. Substrate-binding residues include Ser-177 and His-204. Mn(2+)-binding residues include His-204 and His-206.

It belongs to the 4-hydroxy-2-oxovalerate aldolase family.

It catalyses the reaction (S)-4-hydroxy-2-oxopentanoate = acetaldehyde + pyruvate. Involved in the biosynthesis of the peptidyl nucleoside antibiotic nikkomycin. The polypeptide is 4-hydroxy-2-oxovalerate aldolase (Streptomyces tendae).